A 116-amino-acid polypeptide reads, in one-letter code: Small ribosomal subunit protein uS13 (116 aa).

Residues 92–116 form a disordered region; it reads RRGLPVRGQNTKNNARTRKGAKRSR. Basic residues predominate over residues 106–116; the sequence is ARTRKGAKRSR.

The protein belongs to the universal ribosomal protein uS13 family. As to quaternary structure, part of the 30S ribosomal subunit. Forms a loose heterodimer with protein S19. Forms two bridges to the 50S subunit in the 70S ribosome.

Located at the top of the head of the 30S subunit, it contacts several helices of the 16S rRNA. In the 70S ribosome it contacts the 23S rRNA (bridge B1a) and protein L5 of the 50S subunit (bridge B1b), connecting the 2 subunits; these bridges are implicated in subunit movement. Contacts the tRNAs in the A and P-sites. The sequence is that of Small ribosomal subunit protein uS13 from Lactobacillus delbrueckii subsp. bulgaricus (strain ATCC 11842 / DSM 20081 / BCRC 10696 / JCM 1002 / NBRC 13953 / NCIMB 11778 / NCTC 12712 / WDCM 00102 / Lb 14).